The primary structure comprises 475 residues: ATP synthase subunit beta, chloroplastic (475 aa).

156-163 (GGAGVGKT) is a binding site for ATP.

It belongs to the ATPase alpha/beta chains family. As to quaternary structure, F-type ATPases have 2 components, CF(1) - the catalytic core - and CF(0) - the membrane proton channel. CF(1) has five subunits: alpha(3), beta(3), gamma(1), delta(1), epsilon(1). CF(0) has four main subunits: a(1), b(1), b'(1) and c(9-12).

The protein resides in the plastid. The protein localises to the chloroplast thylakoid membrane. It catalyses the reaction ATP + H2O + 4 H(+)(in) = ADP + phosphate + 5 H(+)(out). Produces ATP from ADP in the presence of a proton gradient across the membrane. The catalytic sites are hosted primarily by the beta subunits. In Gracilaria tenuistipitata var. liui (Red alga), this protein is ATP synthase subunit beta, chloroplastic.